We begin with the raw amino-acid sequence, 149 residues long: Transcriptional repressor NrdR (149 aa).

Residues 3 to 33 (CPFCSSEDTKVVDSRTTIDGSTKRRRECNNC) fold into a zinc finger. In terms of domain architecture, ATP-cone spans 48 to 138 (IYVVKKDNRR…VYKEFDDIKS (91 aa)).

It belongs to the NrdR family. Zn(2+) is required as a cofactor.

Its function is as follows. Negatively regulates transcription of bacterial ribonucleotide reductase nrd genes and operons by binding to NrdR-boxes. This chain is Transcriptional repressor NrdR, found in Fusobacterium nucleatum subsp. nucleatum (strain ATCC 25586 / DSM 15643 / BCRC 10681 / CIP 101130 / JCM 8532 / KCTC 2640 / LMG 13131 / VPI 4355).